We begin with the raw amino-acid sequence, 354 residues long: Guanine nucleotide-binding protein G(q) subunit alpha (354 aa).

2 S-palmitoyl cysteine lipidation sites follow: cysteine 3 and cysteine 4. The G-alpha domain occupies 32–354; the sequence is RELKLLLLGT…QLNLKEYNLV (323 aa). The tract at residues 35 to 48 is G1 motif; it reads KLLLLGTGESGKST. GTP contacts are provided by residues 40–47, 174–180, 199–203, 269–272, and alanine 326; these read GTGESGKS, LRVRVPT, DVGGQ, and NKKD. Mg(2+) is bound by residues serine 47 and threonine 180. A G2 motif region spans residues 172 to 180; sequence DILRVRVPT. A G3 motif region spans residues 195–204; the sequence is FRMVDVGGQR. The G4 motif stretch occupies residues 265-272; it reads ILFLNKKD. Residues 324–329 form a G5 motif region; the sequence is TCATDT.

Belongs to the G-alpha family. G(q) subfamily. In terms of assembly, g proteins are composed of 3 units; alpha, beta and gamma. The alpha chain contains the guanine nucleotide binding site. As to expression, a high concentration was found in the retinal light-sensitive outer segment.

Its function is as follows. Guanine nucleotide-binding proteins (G proteins) are involved as modulators or transducers in various transmembrane signaling systems. In terms of biological role, the G(q) alpha subunit is involved in the light-dependent activation of phospholipase C. This is Guanine nucleotide-binding protein G(q) subunit alpha from Loligo forbesii (Veined squid).